Here is a 497-residue protein sequence, read N- to C-terminus: Acetyl-coenzyme A carboxylase carboxyl transferase subunit beta (497 aa).

One can recognise a CoA carboxyltransferase N-terminal domain in the interval leucine 217–tyrosine 489. Positions 221, 224, 240, and 243 each coordinate Zn(2+). The segment at cysteine 221–cysteine 243 adopts a C4-type zinc-finger fold.

It belongs to the AccD/PCCB family. As to quaternary structure, acetyl-CoA carboxylase is a heterohexamer composed of biotin carboxyl carrier protein, biotin carboxylase and 2 subunits each of ACCase subunit alpha and ACCase plastid-coded subunit beta (accD). Requires Zn(2+) as cofactor.

Its subcellular location is the plastid. It carries out the reaction N(6)-carboxybiotinyl-L-lysyl-[protein] + acetyl-CoA = N(6)-biotinyl-L-lysyl-[protein] + malonyl-CoA. It participates in lipid metabolism; malonyl-CoA biosynthesis; malonyl-CoA from acetyl-CoA: step 1/1. Its function is as follows. Component of the acetyl coenzyme A carboxylase (ACC) complex. Biotin carboxylase (BC) catalyzes the carboxylation of biotin on its carrier protein (BCCP) and then the CO(2) group is transferred by the transcarboxylase to acetyl-CoA to form malonyl-CoA. This Cuscuta reflexa (Southern Asian dodder) protein is Acetyl-coenzyme A carboxylase carboxyl transferase subunit beta.